We begin with the raw amino-acid sequence, 319 residues long: Protoheme IX farnesyltransferase (319 aa).

Transmembrane regions (helical) follow at residues 34–54 (VMSL…GHIN), 55–75 (PVLG…SGAL), 95–115 (IPAG…LSGF), 119–139 (ILGL…IFFY), 155–175 (IVIG…CVTG), 182–202 (VVLF…LALF), 221–241 (VPTT…IGVV), 244–264 (FMGF…VIFV), and 291–311 (IFYL…AVLM).

Belongs to the UbiA prenyltransferase family. Protoheme IX farnesyltransferase subfamily.

The protein localises to the cell inner membrane. The catalysed reaction is heme b + (2E,6E)-farnesyl diphosphate + H2O = Fe(II)-heme o + diphosphate. The protein operates within porphyrin-containing compound metabolism; heme O biosynthesis; heme O from protoheme: step 1/1. In terms of biological role, converts heme B (protoheme IX) to heme O by substitution of the vinyl group on carbon 2 of heme B porphyrin ring with a hydroxyethyl farnesyl side group. This is Protoheme IX farnesyltransferase from Rhizobium rhizogenes (strain K84 / ATCC BAA-868) (Agrobacterium radiobacter).